The primary structure comprises 105 residues: Small ribosomal subunit protein eS24 (105 aa).

The protein belongs to the eukaryotic ribosomal protein eS24 family.

The polypeptide is Small ribosomal subunit protein eS24 (Haloquadratum walsbyi (strain DSM 16790 / HBSQ001)).